Consider the following 1457-residue polypeptide: DNA-directed RNA polymerase III subunit RPC1 (1457 aa).

7 residues coordinate Zn(2+): C67, C70, C77, H80, C107, C110, and C154. The Mg(2+) site is built by D508, D510, and D512. The bridging helix stretch occupies residues 854 to 866 (PPEFLFHSISGRE).

It belongs to the RNA polymerase beta' chain family. In terms of assembly, component of the RNA polymerase III (Pol III) complex consisting of 17 subunits.

The protein resides in the nucleus. It catalyses the reaction RNA(n) + a ribonucleoside 5'-triphosphate = RNA(n+1) + diphosphate. Functionally, DNA-dependent RNA polymerase catalyzes the transcription of DNA into RNA using the four ribonucleoside triphosphates as substrates. Largest and catalytic core component of RNA polymerase III which synthesizes small RNAs, such as 5S rRNA and tRNAs. Forms the polymerase active center together with the second largest subunit. A single-stranded DNA template strand of the promoter is positioned within the central active site cleft of Pol III. A bridging helix emanates from RPC1 and crosses the cleft near the catalytic site and is thought to promote translocation of Pol III by acting as a ratchet that moves the RNA-DNA hybrid through the active site by switching from straight to bent conformations at each step of nucleotide addition. The protein is DNA-directed RNA polymerase III subunit RPC1 (RPC1) of Debaryomyces hansenii (strain ATCC 36239 / CBS 767 / BCRC 21394 / JCM 1990 / NBRC 0083 / IGC 2968) (Yeast).